The sequence spans 107 residues: Putative double-stranded DNA mimic protein PC1_1990 (107 aa).

It belongs to the putative dsDNA mimic protein family.

May act as a double-stranded DNA (dsDNA) mimic. Probably regulates the activity of a dsDNA-binding protein. The chain is Putative double-stranded DNA mimic protein PC1_1990 from Pectobacterium carotovorum subsp. carotovorum (strain PC1).